The following is a 1556-amino-acid chain: MSLAKLLNNDDDDNNINLPNINVNNTNTNDTSSSIVTNTHTTNTTTNLQKEKFLNKLNNDFNLLNKRDNLELNYQDWKFLNYQEFELLNEWNQQSKEWNNSIKNFEYLYSLMKKYKSEWENYLTLKSSDKYLKNVVNDCLINSNTNNLKSKSKLKTDTKTKAKSKSKSKLKLKSNSDAKVKSKSSNAKAKAKTKSVSTQQKRKRTTSIKNLLEKEDSALTSLDDMDEIDDVNEILNNDNNDEITQNSKDLSTTTATEKKLNTKTSPSKKRKDEVRVAMKKPMTSTPNVKTENKSKQKSNKKNIDADDNTYDDNNLINGKDTEELDDIEKAKDLEDNTDIEIEGTNENEDEDEDEDEDEDEDEEDEEEGEEEEEEEEDEEGVINMIENEDDEDYFAPGKKSGRQNASKVAGEPAAPVPKTPTTIHSDRERIVRELIKMCNKNKNKKSRKRRFTNSIVTDYNPEENKLIVKVTLKQYHVRKLKKLINDAKKLREEEEMKLKKSLMKEAENAEELEGPSSKKKKLNSGTAQNENGGEQNSEFIQNTHDLPTYGMQMTLKEAKAIKRHYDNTFFTILKDLARKDSAKMARLVQQIQSIRATNFKKNSSVCAREARKWQQRNFKQVKDFQTRARRGIREMLNYWKKNEREERDLKKKAEKVAMEQARKEEEDRENVRQAKKLNFLLTQTELYSHFIGSKIKTNELEGNMKDDEFDENEDNLMNNIDLDSTSSVKTDFKTIDFDNEDDDELRRKAAQNASNVLQKSREKTKKFDNDTSNGEELNFQNPTSLGEVVIEQPSILACTLKEYQLKGLNWLANLYDQGINGILADEMGLGKTVQSISVLAHLAEKYNIWGPFLVVTPASTLHNWVNEISKFVPQFKILPYWGNSNDRKILRRFWDRKNLRYNKDSPFHVMITSYQMVVSDTSYLQKMKWQYMILDEAQAIKSSQSSRWRNLLSFHCRNRLLLTGTPIQNNMQELWALLHFIMPSLFDSHDEFNDWFSKDIESHAEANTKLNQQQLRRLHMILKPFMLRRVKKNVQSELGDKIEIDVMCDLTQRQAKLYQILKSQMSTNYDVIENAAGDDDTGSDQNMINAVMQFRKVCNHPDLFERADVDSPFSFSIFGKSSSLSRDNEPLVDILYSTRNPITYHLPRLIYNDLILPNYENDLGLKNKLLNYTFSIFNNESTCKEISRVTGLTYGEIKRVVHRDLLMNAIHLKEPYSRQTFLEKISVIEDNDKTFSDMNFKSNLKLIERSAKLDALSRVTSTGVLNSLLNIKEQVFDNEYYNAISRSYHPNVSSSPVSIQVLGNRHFSIQQEEELFKPVISKALSEIPASTQYNMAVEKKIPLHDFPVSGLYPSPLNKSFSSYISMPSMDRFITESAKLKKLDELLVELKKGDHRVLIYFQMTKMMDLMEEYLTYRQYSHIRLDGSSKLEDRRDLVHDWQTRPDIFIFLLSTRAGGLGINLTAADTVIFYDSDWNPTIDSQAMDRAHRLGQTRQVTVYRLLIRGTIEERMRDRAKQKEHVQQVVMEGKTLQKDVKTIESGGDVKAAAAASTALTTN.

Disordered regions lie at residues 153-209, 236-426, and 502-538; these read KLKT…TSIK, NNDN…IHSD, and LMKE…QNSE. T156 carries the phosphothreonine modification. Residues 161-172 show a composition bias toward basic residues; sequence KAKSKSKSKLKL. The span at 181–198 shows a compositional bias: low complexity; sequence KSKSSNAKAKAKTKSVST. Polar residues predominate over residues 244-255; that stretch reads TQNSKDLSTTTA. Over residues 335–393 the composition is skewed to acidic residues; the sequence is DNTDIEIEGTNENEDEDEDEDEDEDEDEEDEEEGEEEEEEEEDEEGVINMIENEDDEDY. Residues 523 to 538 are compositionally biased toward polar residues; the sequence is NSGTAQNENGGEQNSE. The region spanning 572–697 is the DBINO domain; the sequence is ILKDLARKDS…SHFIGSKIKT (126 aa). The tract at residues 751 to 779 is disordered; the sequence is QNASNVLQKSREKTKKFDNDTSNGEELNF. The segment covering 759–769 has biased composition (basic and acidic residues); sequence KSREKTKKFDN. The segment covering 770-779 has biased composition (polar residues); that stretch reads DTSNGEELNF. The 173-residue stretch at 812–984 folds into the Helicase ATP-binding domain; sequence ANLYDQGING…WALLHFIMPS (173 aa). 825–832 contributes to the ATP binding site; that stretch reads DEMGLGKT. Residues 935–938 carry the DEAQ box motif; the sequence is DEAQ. A Helicase C-terminal domain is found at 1381–1535; the sequence is KLDELLVELK…EGKTLQKDVK (155 aa).

The protein belongs to the SNF2/RAD54 helicase family. As to quaternary structure, component of the INO80 chromatin-remodeling complex.

Its subcellular location is the nucleus. The catalysed reaction is ATP + H2O = ADP + phosphate + H(+). Functionally, ATPase component of the INO80 complex which remodels chromatin by shifting nucleosomes and is involved in DNA repair. This Vanderwaltozyma polyspora (strain ATCC 22028 / DSM 70294 / BCRC 21397 / CBS 2163 / NBRC 10782 / NRRL Y-8283 / UCD 57-17) (Kluyveromyces polysporus) protein is Chromatin-remodeling ATPase INO80 (INO80).